The following is a 24-amino-acid chain: Humanin-like 13 (24 aa).

The protein belongs to the humanin family.

Its subcellular location is the secreted. The protein localises to the cytoplasm. Its function is as follows. Plays a role as a neuroprotective and antiapoptotic factor. In Homo sapiens (Human), this protein is Humanin-like 13.